The sequence spans 871 residues: Coatomer subunit gamma-2 (871 aa).

Positions 1–11 are enriched in basic and acidic residues; that stretch reads MIKKFDKKDEE. Residues 1-21 form a disordered region; sequence MIKKFDKKDEESGSGSNPFQH. HEAT repeat units lie at residues 64-101, 283-320, 321-355, 356-392, 395-430, and 467-504; these read TEATEAFFAMTRLFQSNDQTLRRMCYLTIKEMATISED, RELAPAVSVLQLFCSSPKPALRYAAVRTLNKVAMKHPS, AVTACNLDLENLITDSNRSIATLAITTLLKTGSES, SVDRLMKQISSFVSEISDEFKVVVVQAISALCQKYPR, SVMMTFLSNMLRDDGGFEYKRAIVDCIISIVEENPE, and PVPSKYIRFIFNRVVLENEAVRAAAVSALAKFGAQNES. A Phosphothreonine modification is found at Thr594.

Belongs to the COPG family. In terms of assembly, oligomeric complex. Binds to CDC42. Interacts with JAGN1. Interacts with TMED10 (via cytoplasmic domain).

It localises to the cytoplasm. The protein resides in the cytosol. The protein localises to the golgi apparatus membrane. It is found in the cytoplasmic vesicle. Its subcellular location is the COPI-coated vesicle membrane. The coatomer is a cytosolic protein complex that binds to dilysine motifs and reversibly associates with Golgi non-clathrin-coated vesicles, which further mediate biosynthetic protein transport from the ER, via the Golgi up to the trans Golgi network. Coatomer complex is required for budding from Golgi membranes, and is essential for the retrograde Golgi-to-ER transport of dilysine-tagged proteins. In mammals, the coatomer can only be recruited by membranes associated to ADP-ribosylation factors (ARFs), which are small GTP-binding proteins; the complex also influences the Golgi structural integrity, as well as the processing, activity, and endocytic recycling of LDL receptors. The protein is Coatomer subunit gamma-2 (COPG2) of Homo sapiens (Human).